The chain runs to 79 residues: Small ribosomal subunit protein bS18 (79 aa).

It belongs to the bacterial ribosomal protein bS18 family. In terms of assembly, part of the 30S ribosomal subunit. Forms a tight heterodimer with protein bS6.

In terms of biological role, binds as a heterodimer with protein bS6 to the central domain of the 16S rRNA, where it helps stabilize the platform of the 30S subunit. The sequence is that of Small ribosomal subunit protein bS18 from Bacillus velezensis (strain DSM 23117 / BGSC 10A6 / LMG 26770 / FZB42) (Bacillus amyloliquefaciens subsp. plantarum).